Consider the following 27-residue polypeptide: Flagellar filament 34 kDa core protein (27 aa).

Belongs to the bacterial flagellin family. As to quaternary structure, the flagellum consists of an outer layer composed of repeating units of FlaA around a core that contains one or all of five antigenically related polypeptides.

It localises to the periplasmic flagellum. The protein localises to the periplasm. Functionally, component of the core of the flagella. This is Flagellar filament 34 kDa core protein from Spirochaeta aurantia.